Reading from the N-terminus, the 204-residue chain is Holliday junction branch migration complex subunit RuvA (204 aa).

The domain I stretch occupies residues 1-64 (MIGKLKGTID…EDQLKLFGFM (64 aa)). A domain II region spans residues 65–143 (TALEREWFNL…AFAGEAINIA (79 aa)). Positions 144 to 151 (LKQELGEG) are flexible linker. Positions 152-204 (VAAAPVADAVSALTNLGYSRDQAANAVAAAMKTAGDGADSAKLIRLGLKELAR) are domain III.

Belongs to the RuvA family. Homotetramer. Forms an RuvA(8)-RuvB(12)-Holliday junction (HJ) complex. HJ DNA is sandwiched between 2 RuvA tetramers; dsDNA enters through RuvA and exits via RuvB. An RuvB hexamer assembles on each DNA strand where it exits the tetramer. Each RuvB hexamer is contacted by two RuvA subunits (via domain III) on 2 adjacent RuvB subunits; this complex drives branch migration. In the full resolvosome a probable DNA-RuvA(4)-RuvB(12)-RuvC(2) complex forms which resolves the HJ.

Its subcellular location is the cytoplasm. Its function is as follows. The RuvA-RuvB-RuvC complex processes Holliday junction (HJ) DNA during genetic recombination and DNA repair, while the RuvA-RuvB complex plays an important role in the rescue of blocked DNA replication forks via replication fork reversal (RFR). RuvA specifically binds to HJ cruciform DNA, conferring on it an open structure. The RuvB hexamer acts as an ATP-dependent pump, pulling dsDNA into and through the RuvAB complex. HJ branch migration allows RuvC to scan DNA until it finds its consensus sequence, where it cleaves and resolves the cruciform DNA. The protein is Holliday junction branch migration complex subunit RuvA of Rhizobium etli (strain CIAT 652).